The following is a 231-amino-acid chain: Orotidine 5'-phosphate decarboxylase (231 aa).

Residues D11, K34, 61–70, T117, R179, Q188, G208, and R209 each bind substrate; that span reads DLKLHDIPNT. K63 (proton donor) is an active-site residue.

The protein belongs to the OMP decarboxylase family. Type 1 subfamily. In terms of assembly, homodimer.

It catalyses the reaction orotidine 5'-phosphate + H(+) = UMP + CO2. The protein operates within pyrimidine metabolism; UMP biosynthesis via de novo pathway; UMP from orotate: step 2/2. Catalyzes the decarboxylation of orotidine 5'-monophosphate (OMP) to uridine 5'-monophosphate (UMP). This is Orotidine 5'-phosphate decarboxylase from Streptococcus thermophilus (strain ATCC BAA-491 / LMD-9).